Consider the following 426-residue polypeptide: High affinity 3',5'-cyclic-AMP phosphodiesterase 7A (426 aa).

Residues 80-402 enclose the PDEase domain; that stretch reads LDEDYNGQAK…ASWKGLQRQQ (323 aa). Residue H156 is the Proton donor of the active site. H160, H196, D197, and D306 together coordinate a divalent metal cation.

It belongs to the cyclic nucleotide phosphodiesterase family. PDE7 subfamily. As to quaternary structure, interacts with CBFA2T3. A divalent metal cation serves as cofactor.

Its subcellular location is the cytoplasm. The protein localises to the cytosol. The catalysed reaction is 3',5'-cyclic AMP + H2O = AMP + H(+). It participates in purine metabolism; 3',5'-cyclic AMP degradation; AMP from 3',5'-cyclic AMP: step 1/1. Its function is as follows. Hydrolyzes the second messenger cAMP, which is a key regulator of many important physiological processes. May have a role in muscle signal transduction. The chain is High affinity 3',5'-cyclic-AMP phosphodiesterase 7A (Pde7a) from Rattus norvegicus (Rat).